A 724-amino-acid chain; its full sequence is Ribosomal RNA large subunit methyltransferase K/L (724 aa).

Residues 42–153 (DAQRLVLWSR…KGRATLSVDL (112 aa)) form the THUMP domain.

This sequence belongs to the methyltransferase superfamily. RlmKL family.

The protein resides in the cytoplasm. It carries out the reaction guanosine(2445) in 23S rRNA + S-adenosyl-L-methionine = N(2)-methylguanosine(2445) in 23S rRNA + S-adenosyl-L-homocysteine + H(+). The catalysed reaction is guanosine(2069) in 23S rRNA + S-adenosyl-L-methionine = N(2)-methylguanosine(2069) in 23S rRNA + S-adenosyl-L-homocysteine + H(+). In terms of biological role, specifically methylates the guanine in position 2445 (m2G2445) and the guanine in position 2069 (m7G2069) of 23S rRNA. In Xylella fastidiosa (strain 9a5c), this protein is Ribosomal RNA large subunit methyltransferase K/L.